Reading from the N-terminus, the 388-residue chain is Ferrochelatase (388 aa).

Fe cation is bound by residues H196 and E277.

The protein belongs to the ferrochelatase family.

The protein localises to the cytoplasm. The enzyme catalyses heme b + 2 H(+) = protoporphyrin IX + Fe(2+). The protein operates within porphyrin-containing compound metabolism; protoheme biosynthesis; protoheme from protoporphyrin-IX: step 1/1. Catalyzes the ferrous insertion into protoporphyrin IX. This Nostoc sp. (strain PCC 7120 / SAG 25.82 / UTEX 2576) protein is Ferrochelatase.